Here is a 253-residue protein sequence, read N- to C-terminus: Proproteinase E (253 aa).

The propeptide at 1–11 (FSQPFSRPSSR) is activation peptide. In terms of domain architecture, Peptidase S1 spans 12 to 251 (VVNGEDAVPY…FIDWIDETIA (240 aa)). 5 disulfides stabilise this stretch: C41–C57, C100–C103, C140–C206, C171–C187, and C196–C227.

It belongs to the peptidase S1 family. As to quaternary structure, monomer. The zymogen is secreted as a ternary complex composed of procarboxypeptidase A, chymotrypsinogen C and proproteinase E. Pancreas.

It is found in the secreted. The protein resides in the extracellular space. May protect procarboxypeptidase A against denaturation in the acidic environment of the ruminant duodenum. The chain is Proproteinase E from Bos taurus (Bovine).